The primary structure comprises 273 residues: MTDTTGNPLLSLDDIHFTYPGTTAPVLRGATLHLAQGDRLGLLGHNGSGKTTLLHIAMGLLRPESGTVHHRNAVAHDEASLAALRRDIGFLFQNADDQLFCPTVLEDVAFGPLNLGLSPEQARERATQTLQGLGLEGFGARVTHRLSGGEKKMVALASVLSMQPTALLLDEPTNDLDPATRQRLIDVLNRMSATHIIISHDWDFLARTCTTFLTVDDGIVCTSRHTPHVHTHIHHGGEVAHEHPSRGCCHQHDGSHHHAGHDDDHPHTSQTTE.

An ABC transporter domain is found at 10 to 242 (LSLDDIHFTY…IHHGGEVAHE (233 aa)). 44 to 51 (GHNGSGKT) contacts ATP. The tract at residues 234-273 (HHGGEVAHEHPSRGCCHQHDGSHHHAGHDDDHPHTSQTTE) is disordered. Basic and acidic residues predominate over residues 235 to 267 (HGGEVAHEHPSRGCCHQHDGSHHHAGHDDDHPH).

Belongs to the ABC transporter superfamily.

Its subcellular location is the cell inner membrane. In terms of biological role, probably part of an ABC transporter complex. Responsible for energy coupling to the transport system. The protein is Putative ABC transporter ATP-binding protein DVU_1056 of Nitratidesulfovibrio vulgaris (strain ATCC 29579 / DSM 644 / CCUG 34227 / NCIMB 8303 / VKM B-1760 / Hildenborough) (Desulfovibrio vulgaris).